A 559-amino-acid polypeptide reads, in one-letter code: Laccase-7 (559 aa).

An N-terminal signal peptide occupies residues 1 to 28 (MVIPWCSSMMRLLWFLFALLLARSVADA). Residues Asn32, Asn47, and Asn82 are each glycosylated (N-linked (GlcNAc...) asparagine). 2 Plastocyanin-like domains span residues 36–152 (TVES…PRNG) and 163–316 (EVPI…YNTT). Positions 86 and 88 each coordinate Cu cation. Asn112 and Asn120 each carry an N-linked (GlcNAc...) asparagine glycan. Cu cation is bound by residues His131 and His133. N-linked (GlcNAc...) asparagine glycans are attached at residues Asn151, Asn210, Asn220, Asn257, Asn278, Asn314, Asn363, and Asn443. Positions 396-543 (FRLPSQMSLL…GMVFAVDNGT (148 aa)) constitute a Plastocyanin-like 3 domain. 3 residues coordinate Cu cation: His461, His464, and His466. A glycan (N-linked (GlcNAc...) asparagine) is linked at Asn484. His522, Cys523, His524, and His528 together coordinate Cu cation. Residue Asn541 is glycosylated (N-linked (GlcNAc...) asparagine).

Belongs to the multicopper oxidase family. It depends on Cu cation as a cofactor.

It localises to the secreted. It is found in the extracellular space. Its subcellular location is the apoplast. The enzyme catalyses 4 hydroquinone + O2 = 4 benzosemiquinone + 2 H2O. In terms of biological role, lignin degradation and detoxification of lignin-derived products. In Oryza sativa subsp. japonica (Rice), this protein is Laccase-7 (LAC7).